Consider the following 421-residue polypeptide: Elongation factor 1-alpha (421 aa).

The tr-type G domain maps to 4 to 220; sequence NRHQNLAVIG…NGLPVPQPPT (217 aa). The G1 stretch occupies residues 13–20; that stretch reads GHVDHGKS. 13–20 lines the GTP pocket; the sequence is GHVDHGKS. Position 20 (S20) interacts with Mg(2+). The segment at 69–73 is G2; it reads GVTID. A G3 region spans residues 90-93; that stretch reads DCPG. Residues 90 to 94 and 145 to 148 contribute to the GTP site; these read DCPGH and NKMD. Residues 145–148 form a G4 region; sequence NKMD. Residues 184–186 form a G5 region; it reads SAF.

The protein belongs to the TRAFAC class translation factor GTPase superfamily. Classic translation factor GTPase family. EF-Tu/EF-1A subfamily.

It localises to the cytoplasm. The enzyme catalyses GTP + H2O = GDP + phosphate + H(+). In terms of biological role, GTP hydrolase that promotes the GTP-dependent binding of aminoacyl-tRNA to the A-site of ribosomes during protein biosynthesis. The chain is Elongation factor 1-alpha from Halobacterium salinarum (strain ATCC 700922 / JCM 11081 / NRC-1) (Halobacterium halobium).